A 744-amino-acid chain; its full sequence is Receptor-like serine/threonine-protein kinase ALE2 (744 aa).

The first 19 residues, 1-19 (MRNFAMLLLLILLLHSLAS), serve as a signal peptide directing secretion. At 20–260 (FPICFARLFP…SQGIGFRTIA (241 aa)) the chain is on the extracellular side. The segment covering 59-68 (PAFSPNPSRI) has biased composition (pro residues). The interval 59-79 (PAFSPNPSRIPPLRHKGHHRH) is disordered. Positions 70–79 (PLRHKGHHRH) are enriched in basic residues. N-linked (GlcNAc...) asparagine glycosylation is found at Asn87, Asn186, Asn204, Asn243, and Asn249. A helical transmembrane segment spans residues 261–281 (IIALSGFVLILVLVGAISIIV). Over 282–744 (KWKKIGKSSN…HLWSGNGDWL (463 aa)) the chain is Cytoplasmic. The 271-residue stretch at 349-619 (FSAKRVLGEG…GEVVQALKLI (271 aa)) folds into the Protein kinase domain. ATP-binding positions include 355–363 (LGEGGFGRV) and Lys377. Asp470 acts as the Proton acceptor in catalysis. Disordered regions lie at residues 681-705 (EDMENRPHSASSIPRVGGLILPNRS) and 722-744 (GSMSEHGGPSSSRHLWSGNGDWL).

The protein belongs to the protein kinase superfamily. Ser/Thr protein kinase family. In terms of processing, autophosphorylated and phosphorylated by ACR4.

It localises to the cell membrane. The catalysed reaction is L-seryl-[protein] + ATP = O-phospho-L-seryl-[protein] + ADP + H(+). It catalyses the reaction L-threonyl-[protein] + ATP = O-phospho-L-threonyl-[protein] + ADP + H(+). Required during the differentiation of the protoderm into shoots epidermis and cuticle. The sequence is that of Receptor-like serine/threonine-protein kinase ALE2 (ALE2) from Arabidopsis thaliana (Mouse-ear cress).